The following is a 142-amino-acid chain: Large ribosomal subunit protein uL13 (142 aa).

This sequence belongs to the universal ribosomal protein uL13 family. In terms of assembly, part of the 50S ribosomal subunit.

Functionally, this protein is one of the early assembly proteins of the 50S ribosomal subunit, although it is not seen to bind rRNA by itself. It is important during the early stages of 50S assembly. This Shewanella frigidimarina (strain NCIMB 400) protein is Large ribosomal subunit protein uL13.